The primary structure comprises 120 residues: MGFPIPDPYVWDESFKVFYQLLDDKHKQIFQGVFDCAKDPSSAAKLQKLIEVTAKHFSDEENMMQQSKYSGYPPHKKAHEEFLGKLRGLRAPLDTAGLDYCKDWLVQHIKTIDFKYKGKL.

Residues His-26, His-56, Glu-60, His-75, His-79, His-108, and Asp-113 each contribute to the Fe cation site.

It belongs to the hemerythrin family.

In terms of biological role, myohemerythrin is an oxygen-binding protein found in the retractor muscles of certain worms. The oxygen-binding site contains two iron atoms. The chain is Myohemerythrin from Sipunculus nudus (Sipunculan worm).